Consider the following 512-residue polypeptide: D-alanine--D-alanyl carrier protein ligase (512 aa).

152–153 (TS) lines the ATP pocket. D199 contributes to the D-alanine binding site. Position 294–299 (294–299 (NAYGPT)) interacts with ATP. V303 contributes to the D-alanine binding site. ATP contacts are provided by residues D385, 397–400 (YGGR), and K499. K499 is a D-alanine binding site.

This sequence belongs to the ATP-dependent AMP-binding enzyme family. DltA subfamily.

The protein resides in the cytoplasm. It carries out the reaction holo-[D-alanyl-carrier protein] + D-alanine + ATP = D-alanyl-[D-alanyl-carrier protein] + AMP + diphosphate. It participates in cell wall biogenesis; lipoteichoic acid biosynthesis. Catalyzes the first step in the D-alanylation of lipoteichoic acid (LTA), the activation of D-alanine and its transfer onto the D-alanyl carrier protein (Dcp) DltC. In an ATP-dependent two-step reaction, forms a high energy D-alanyl-AMP intermediate, followed by transfer of the D-alanyl residue as a thiol ester to the phosphopantheinyl prosthetic group of the Dcp. D-alanylation of LTA plays an important role in modulating the properties of the cell wall in Gram-positive bacteria, influencing the net charge of the cell wall. The sequence is that of D-alanine--D-alanyl carrier protein ligase from Streptococcus pyogenes serotype M49 (strain NZ131).